Here is a 1091-residue protein sequence, read N- to C-terminus: Multiple epidermal growth factor-like domains protein 11 (1091 aa).

Residues 1–18 (MAPSAVGLLVFLLQAALA) form the signal peptide. At 19-847 (LNPEDPNVCS…SPALGAERHS (829 aa)) the chain is on the extracellular side. The EMI domain occupies 23-100 (DPNVCSHWES…YYENGDFCIP (78 aa)). 14 disulfides stabilise this stretch: C27–C88, C53–C62, C87–C98, C102–C117, C119–C128, C145–C153, C147–C160, C162–C171, C184–C196, C190–C203, C205–C214, C227–C239, C233–C246, and C248–C257. EGF-like domains follow at residues 94 to 129 (NGDF…PDCS), 142 to 172 (SNRC…WRCE), 180 to 215 (HGKG…VYCE), 223 to 258 (HGAH…AVCA), 266 to 301 (FGQN…DRCQ), 314 to 344 (SQRC…PSCQ), 398 to 433 (YGNG…EVCA), 441 to 476 (YGPN…LDCS), and 484 to 519 (WGLN…DSCE). A glycan (N-linked (GlcNAc...) asparagine) is linked at N269. Cystine bridges form between C270/C282, C276/C289, C291/C300, C317/C325, C319/C332, C334/C343, C402/C414, C408/C421, C423/C432, C445/C457, C451/C464, C466/C475, C488/C500, C494/C507, and C509/C518. A glycan (N-linked (GlcNAc...) asparagine) is linked at N530. EGF-like domains follow at residues 570–605 (WGPN…PLCQ), 613–650 (YGHG…ALCN), 658–693 (FGQD…KDCS), 706–736 (FHTC…LFCT), 749–779 (GHIC…RHCE), and 787–822 (FGYG…IRCD). Disulfide bonds link C574/C586, C580/C593, C595/C604, C617/C631, C621/C638, C640/C649, C662/C674, C668/C681, C683/C692, C709/C717, C711/C724, C726/C735, C752/C760, C754/C767, C769/C778, C791/C803, C797/C810, and C812/C821. The helical transmembrane segment at 848 to 868 (VGAVTGIVLLLFLVVVLLGLF) threads the bilayer. Residues 869-1091 (AWRRRRQKEK…NIYEVGRCLT (223 aa)) lie on the Cytoplasmic side of the membrane.

Belongs to the MEGF family. In terms of assembly, homomer. Does not interact with MEGF10.

The protein localises to the cell membrane. It is found in the basolateral cell membrane. May regulate the mosaic spacing of specific neuron subtypes in the retina through homotypic retinal neuron repulsion. Mosaics provide a mechanism to distribute each cell type evenly across the retina, ensuring that all parts of the visual field have access to a full set of processing elements. The polypeptide is Multiple epidermal growth factor-like domains protein 11 (Megf11) (Mus musculus (Mouse)).